We begin with the raw amino-acid sequence, 512 residues long: Ribose import ATP-binding protein RbsA 2 (512 aa).

2 ABC transporter domains span residues 7–242 (LEIR…VGRE) and 257–498 (LGEP…SGIG). ATP is bound at residue 39-46 (GENGAGKS).

This sequence belongs to the ABC transporter superfamily. Ribose importer (TC 3.A.1.2.1) family. As to quaternary structure, the complex is composed of an ATP-binding protein (RbsA), two transmembrane proteins (RbsC) and a solute-binding protein (RbsB).

It localises to the cell inner membrane. It carries out the reaction D-ribose(out) + ATP + H2O = D-ribose(in) + ADP + phosphate + H(+). Part of the ABC transporter complex RbsABC involved in ribose import. Responsible for energy coupling to the transport system. This chain is Ribose import ATP-binding protein RbsA 2, found in Rhizobium meliloti (strain 1021) (Ensifer meliloti).